A 336-amino-acid chain; its full sequence is Glucokinase (336 aa).

12 to 17 (ADIGGT) contacts ATP.

This sequence belongs to the bacterial glucokinase family.

It localises to the cytoplasm. The enzyme catalyses D-glucose + ATP = D-glucose 6-phosphate + ADP + H(+). This is Glucokinase from Helicobacter pylori (strain ATCC 700392 / 26695) (Campylobacter pylori).